The sequence spans 523 residues: (R)-citramalate synthase (523 aa).

The Pyruvate carboxyltransferase domain maps to valine 6–lysine 272.

Belongs to the alpha-IPM synthase/homocitrate synthase family.

The catalysed reaction is pyruvate + acetyl-CoA + H2O = (3R)-citramalate + CoA + H(+). Its pathway is amino-acid biosynthesis; L-isoleucine biosynthesis; 2-oxobutanoate from pyruvate: step 1/3. Inhibited by isoleucine. Functionally, catalyzes the condensation of pyruvate and acetyl-coenzyme A to form (R)-citramalate. Makes part of a pathway for isoleucine biosynthesis, i.e. the citramalate-dependent pathway. Also displays a low alpha-isopropylmalate synthase activity, using 2-oxoisovalerate as substrate, but is unable to use 2-oxoglutarate. The sequence is that of (R)-citramalate synthase from Sulfolobus acidocaldarius (strain ATCC 33909 / DSM 639 / JCM 8929 / NBRC 15157 / NCIMB 11770).